Here is a 1168-residue protein sequence, read N- to C-terminus: TBC1 domain family member 1 (1168 aa).

Residue Ser-146 is modified to Phosphoserine. Positions Val-203–Gln-238 are disordered. Phosphoserine; by PKB/AKT1 is present on Ser-235. Ser-237 bears the Phosphoserine mark. Residues Phe-246–Gly-404 enclose the PID domain. A Phosphoserine modification is found at Ser-503. The residue at position 505 (Thr-505) is a Phosphothreonine; by PKB/AKT1. Residues Ser-507, Ser-525, and Ser-527 each carry the phosphoserine modification. The span at Ser-532–Ser-542 shows a compositional bias: low complexity. 2 disordered regions span residues Ser-532–Glu-551 and Gly-564–Gln-587. Phosphoserine occurs at positions 565, 566, 570, 571, and 585. Thr-596 is modified (phosphothreonine). Phosphoserine is present on Ser-614. Residue Ser-627 is modified to Phosphoserine; by PKB/AKT1. Disordered stretches follow at residues Val-628–Arg-658 and Ser-678–Ser-717. Residues Thr-632 to His-645 are compositionally biased toward basic and acidic residues. Phosphoserine occurs at positions 695 and 941. Residues Gly-800–Gly-994 enclose the Rab-GAP TBC domain. Tyr-952 carries the phosphotyrosine modification. The residue at position 1131 (Thr-1131) is a Phosphothreonine. Positions Glu-1145–Glu-1159 are enriched in basic and acidic residues. The disordered stretch occupies residues Glu-1145 to Asp-1168.

As to quaternary structure, interacts with APPL2 (via BAR domain); interaction is dependent of TBC1D1 phosphorylation at Ser-235; interaction diminishes the phosphorylation of TBC1D1 at Thr-596, resulting in inhibition of SLC2A4/GLUT4 translocation and glucose uptake. In terms of processing, insulin-stimulated phosphorylation by AKT family kinases stimulates SLC2A4/GLUT4 translocation.

It is found in the nucleus. Functionally, may act as a GTPase-activating protein for Rab family protein(s). May play a role in the cell cycle and differentiation of various tissues. Involved in the trafficking and translocation of GLUT4-containing vesicles and insulin-stimulated glucose uptake into cells. This chain is TBC1 domain family member 1 (TBC1D1), found in Homo sapiens (Human).